The primary structure comprises 1031 residues: Sister chromatid cohesion 1 protein 4 (1031 aa).

Residues 461–481 form a disordered region; sequence TPDKEDPGTCNDDAGNNNITG. Residues 545 to 552 carry the Nuclear localization signal motif; sequence TKRLRSAP. Disordered stretches follow at residues 661 to 703, 742 to 772, and 803 to 835; these read VEEN…EELK, EKLD…ADPN, and ELPH…VGST. Composition is skewed to basic and acidic residues over residues 742-762 and 803-825; these read EKLD…HDGE and ELPH…RDDQ.

The protein belongs to the rad21 family. As to quaternary structure, component of the cohesin complex. As to expression, expressed in tissues containing dividing cells such as seedlings, flower buds, flowers and inflorescence meristem tissue.

Its subcellular location is the nucleus. It is found in the chromosome. It localises to the centromere. Its function is as follows. Involved in sister chromatid and centromere cohesion during mitosis. The protein is Sister chromatid cohesion 1 protein 4 (SYN4) of Arabidopsis thaliana (Mouse-ear cress).